A 343-amino-acid chain; its full sequence is MASNGTSVSPFRSQKNAAMAVNDTPANGHAEPSTITAASKTNTTKITSQNDPQSSFAVKVGLAQMLKGGVIMDVVNAEQARIAEEAGACAVMALERVPADIRKDGGVARMSDPQMIKDIMNAVTIPVMAKSRIGHFVECQILQAIGVDYIDESEVLTPADPVNHIDKSVYNVPFVCGCKNLGEALRRISEGAAMIRTKGEAGTGDVVEAVRHMQTVNAEIAKASSASDADLRMMARELQCDYNLLKQTAQLKRLPVVNFAAGGIATPADAALMMQMGCDGVFVGSGIFKSGDAAKRAKAIVQATTHYNDPKVLAEVSSGLGEAMVGINCDKLPETQKLATRGW.

Asp73 is a binding site for D-ribose 5-phosphate. The Schiff-base intermediate with D-ribose 5-phosphate role is filled by Lys130. D-ribose 5-phosphate is bound at residue Gly202. Position 214 (Gln214) interacts with D-glyceraldehyde 3-phosphate. D-ribose 5-phosphate is bound by residues Gly263 and 284-285 (GS).

The protein belongs to the PdxS/SNZ family.

The enzyme catalyses aldehydo-D-ribose 5-phosphate + D-glyceraldehyde 3-phosphate + L-glutamine = pyridoxal 5'-phosphate + L-glutamate + phosphate + 3 H2O + H(+). It participates in cofactor biosynthesis; pyridoxal 5'-phosphate biosynthesis. Catalyzes the formation of pyridoxal 5'-phosphate from ribose 5-phosphate (RBP), glyceraldehyde 3-phosphate (G3P) and ammonia. The ammonia is provided by PDX2. Can also use ribulose 5-phosphate and dihydroxyacetone phosphate as substrates, resulting from enzyme-catalyzed isomerization of RBP and G3P, respectively. Also plays an indirect role in resistance to singlet oxygen-generating photosensitizers. This chain is Pyridoxal 5'-phosphate synthase subunit PDX1 (PDX1), found in Cercospora nicotianae (Barn spot disease fungus).